Consider the following 496-residue polypeptide: MLO-like protein 15 (496 aa).

The Extracellular portion of the chain corresponds to 1–9; the sequence is MAGGGTTLE. A helical membrane pass occupies residues 10–30; sequence YTPTWVVALVCSVIVSISFAV. The Cytoplasmic segment spans residues 31–59; the sequence is ERLIHRAGKHFKNNDQKQLFGALQKIKEE. Residues 60–80 form a helical membrane-spanning segment; that stretch reads LMLVGFISLLLSVGQSKIAKI. Topologically, residues 81 to 147 are extracellular; the sequence is CISKELSEKF…MSLSALHELH (67 aa). The chain crosses the membrane as a helical span at residues 148-168; sequence IFIFVLAVAHIIFCLLTIVFG. The Cytoplasmic segment spans residues 169 to 269; it reads TMKIKQWKKW…KYLMRALNSD (101 aa). The helical transmembrane segment at 270–290 threads the bilayer; sequence FKKVVGISWYLWVFVVLFLLL. Residue Asn-291 is a topological domain, extracellular. The chain crosses the membrane as a helical span at residues 292–312; the sequence is IVAWHVYFWLAFIPLILLLAV. Residues 313–355 are Cytoplasmic-facing; that stretch reads GTKLEHIITDLAHEVAEKHIAVEGDLVVRPSDDLFWFQSPRLV. A helical membrane pass occupies residues 356 to 376; the sequence is LFLIHFILFQNSFEIAYFFFI. The Extracellular segment spans residues 377–397; sequence LFQFGWDSCIMDHVKFVIPRL. Residues 398 to 418 form a helical membrane-spanning segment; it reads VIGVIIQLLCSYSTLPLYALV. The Cytoplasmic segment spans residues 419 to 496; sequence TQMGSSFKGA…KEKSEIAHHD (78 aa). The segment at 432-453 is calmodulin-binding; it reads EQTQEHLVGWAKMAKRGVKKGA. Residues 454–496 form a disordered region; the sequence is TQVGTSHDATSPRPSIQLNSLLGKGSSQQNQNPKEKSEIAHHD. The span at 455–485 shows a compositional bias: polar residues; sequence QVGTSHDATSPRPSIQLNSLLGKGSSQQNQN. Positions 486–496 are enriched in basic and acidic residues; that stretch reads PKEKSEIAHHD.

This sequence belongs to the MLO family.

The protein resides in the membrane. Functionally, may be involved in modulation of pathogen defense and leaf cell death. Activity seems to be regulated by Ca(2+)-dependent calmodulin binding and seems not to require heterotrimeric G proteins. This Arabidopsis thaliana (Mouse-ear cress) protein is MLO-like protein 15 (MLO15).